A 362-amino-acid polypeptide reads, in one-letter code: N-acylethanolamine-hydrolyzing acid amidase (362 aa).

A signal peptide spans 1 to 33 (MGTLATRAACHGAHLALALLLLLSLSGPWLSAV). Residues asparagine 42 and asparagine 112 are each glycosylated (N-linked (GlcNAc...) asparagine). Cysteine 131 functions as the Nucleophile in the catalytic mechanism. N-linked (GlcNAc...) asparagine glycosylation is found at asparagine 314 and asparagine 338.

This sequence belongs to the acid ceramidase family. In terms of assembly, heterodimer of an alpha and a beta subunit, produced by autocatalytic cleavage. Post-translationally, N-glycosylated. Tunicamycin treatment causes a reduction in specific activity against N-palmitoylethanolamine. Autoproteolytic cleavage at pH 4.5 gives rise to the alpha and beta subunit. Cleavage gives rise to a conformation change that activates the enzyme. The same catalytic Cys residue mediates the autoproteolytic cleavage and subsequent hydrolysis of lipid substrates.

It localises to the lysosome. It is found in the membrane. It catalyses the reaction N-hexadecanoylethanolamine + H2O = ethanolamine + hexadecanoate. The enzyme catalyses an N-(long-chain fatty acyl)ethanolamine + H2O = a long-chain fatty acid + ethanolamine. It carries out the reaction N-dodecanoylethanolamine + H2O = dodecanoate + ethanolamine. The catalysed reaction is N-tetradecanoylethanolamine + H2O = tetradecanoate + ethanolamine. It catalyses the reaction an N-acylsphing-4-enine + H2O = sphing-4-enine + a fatty acid. The enzyme catalyses N-hexadecanoylsphing-4-enine + H2O = sphing-4-enine + hexadecanoate. It carries out the reaction N-dodecanoylsphing-4-enine + H2O = dodecanoate + sphing-4-enine. Its pathway is lipid metabolism; fatty acid metabolism. Its function is as follows. Degrades bioactive fatty acid amides to their corresponding acids, with the following preference: N-palmitoylethanolamine &gt; N-myristoylethanolamine &gt; N-stearoylethanolamine &gt; N-oleoylethanolamine &gt; N-linoleoylethanolamine &gt; N-arachidonoylethanolamine. The sequence is that of N-acylethanolamine-hydrolyzing acid amidase from Mus musculus (Mouse).